The sequence spans 266 residues: GTP cyclohydrolase FolE2 1 (266 aa).

Belongs to the GTP cyclohydrolase IV family.

The catalysed reaction is GTP + H2O = 7,8-dihydroneopterin 3'-triphosphate + formate + H(+). Its pathway is cofactor biosynthesis; 7,8-dihydroneopterin triphosphate biosynthesis; 7,8-dihydroneopterin triphosphate from GTP: step 1/1. Functionally, converts GTP to 7,8-dihydroneopterin triphosphate. The protein is GTP cyclohydrolase FolE2 1 of Dechloromonas aromatica (strain RCB).